We begin with the raw amino-acid sequence, 187 residues long: Protein dj-1beta (187 aa).

Cysteine sulfinic acid (-SO2H) is present on cysteine 45. Cysteine 104 (nucleophile) is an active-site residue. A Cysteine sulfinic acid (-SO2H); alternate modification is found at cysteine 104.

Oxidation of Cys-45 and Cys-104 in response to oxidative stress. Levels of oxidation increase with age. As to expression, expressed in the head and testis (at protein level). Ubiquitously expressed at constant levels.

It is found in the mitochondrion. The protein resides in the cytoplasm. It localises to the nucleus. In terms of biological role, plays an important role in cell protection against oxidative stress and cell death by acting as a oxidative stress sensor. Does not play a role in methylglyoxal detoxification. Plays a role in mitochondrial function together with Pink1. In motor neurons regulates structural synaptic plasticity of locomotor behavior as part of the PTEN-phosphatidylinositol 3-kinase pathway in response to oxygen species (ROS) levels. In Drosophila melanogaster (Fruit fly), this protein is Protein dj-1beta.